The primary structure comprises 624 residues: Dihydroxy-acid dehydratase (624 aa).

Asp81 is a binding site for Mg(2+). [2Fe-2S] cluster is bound at residue Cys122. Mg(2+) contacts are provided by Asp123 and Lys124. Position 124 is an N6-carboxylysine (Lys124). Cys195 serves as a coordination point for [2Fe-2S] cluster. Position 499 (Glu499) interacts with Mg(2+). Ser525 functions as the Proton acceptor in the catalytic mechanism.

This sequence belongs to the IlvD/Edd family. As to quaternary structure, homodimer. [2Fe-2S] cluster is required as a cofactor. The cofactor is Mg(2+).

The enzyme catalyses (2R)-2,3-dihydroxy-3-methylbutanoate = 3-methyl-2-oxobutanoate + H2O. It catalyses the reaction (2R,3R)-2,3-dihydroxy-3-methylpentanoate = (S)-3-methyl-2-oxopentanoate + H2O. It functions in the pathway amino-acid biosynthesis; L-isoleucine biosynthesis; L-isoleucine from 2-oxobutanoate: step 3/4. The protein operates within amino-acid biosynthesis; L-valine biosynthesis; L-valine from pyruvate: step 3/4. In terms of biological role, functions in the biosynthesis of branched-chain amino acids. Catalyzes the dehydration of (2R,3R)-2,3-dihydroxy-3-methylpentanoate (2,3-dihydroxy-3-methylvalerate) into 2-oxo-3-methylpentanoate (2-oxo-3-methylvalerate) and of (2R)-2,3-dihydroxy-3-methylbutanoate (2,3-dihydroxyisovalerate) into 2-oxo-3-methylbutanoate (2-oxoisovalerate), the penultimate precursor to L-isoleucine and L-valine, respectively. The polypeptide is Dihydroxy-acid dehydratase (Shewanella baltica (strain OS185)).